Reading from the N-terminus, the 447-residue chain is GTPase Der (447 aa).

EngA-type G domains follow at residues Lys-4–Glu-165 and Leu-180–Asn-357. Residues Gly-10–Ser-17, Asp-57–Leu-61, Asn-119–Glu-122, Gly-186–Ser-193, Asp-233–Leu-237, and Asn-298–Asp-301 contribute to the GTP site. The 86-residue stretch at Lys-358–Lys-443 folds into the KH-like domain.

This sequence belongs to the TRAFAC class TrmE-Era-EngA-EngB-Septin-like GTPase superfamily. EngA (Der) GTPase family. In terms of assembly, associates with the 50S ribosomal subunit.

In terms of biological role, GTPase that plays an essential role in the late steps of ribosome biogenesis. This Rickettsia felis (strain ATCC VR-1525 / URRWXCal2) (Rickettsia azadi) protein is GTPase Der.